The chain runs to 229 residues: N-(5'-phosphoribosyl)anthranilate isomerase (229 aa).

Belongs to the TrpF family.

It carries out the reaction N-(5-phospho-beta-D-ribosyl)anthranilate = 1-(2-carboxyphenylamino)-1-deoxy-D-ribulose 5-phosphate. Its pathway is amino-acid biosynthesis; L-tryptophan biosynthesis; L-tryptophan from chorismate: step 3/5. The chain is N-(5'-phosphoribosyl)anthranilate isomerase from Clostridium beijerinckii (strain ATCC 51743 / NCIMB 8052) (Clostridium acetobutylicum).